A 504-amino-acid chain; its full sequence is UDP-glycosyltransferase UGT4 (504 aa).

A signal peptide spans 1-23; that stretch reads MTLLRDLLLLYINSLLFINPSIG. Over 24–474 the chain is Lumenal; it reads ENILVFLPTK…SAVIDLYWFQ (451 aa). N-linked (GlcNAc...) asparagine glycosylation is found at Asn54, Asn66, Asn69, and Asn422. The chain crosses the membrane as a helical span at residues 475 to 495; that stretch reads YILLDIILFYSLIVLILLCIL. Residues 496-504 are Cytoplasmic-facing; the sequence is RIFFRMLTK.

Belongs to the UDP-glycosyltransferase family.

Its subcellular location is the microsome membrane. Its function is as follows. Catalyzes the transfer of a glycosyl group from a UDP-sugar to an acceptor molecule. The sequence is that of UDP-glycosyltransferase UGT4 from Dactylopius coccus (Cochineal).